We begin with the raw amino-acid sequence, 229 residues long: Large ribosomal subunit protein uL1 (229 aa).

It belongs to the universal ribosomal protein uL1 family. Part of the 50S ribosomal subunit.

In terms of biological role, binds directly to 23S rRNA. The L1 stalk is quite mobile in the ribosome, and is involved in E site tRNA release. Protein L1 is also a translational repressor protein, it controls the translation of the L11 operon by binding to its mRNA. This chain is Large ribosomal subunit protein uL1, found in Mannheimia succiniciproducens (strain KCTC 0769BP / MBEL55E).